The following is a 345-amino-acid chain: UPF0324 membrane protein Cgl0015/cg0018 (345 aa).

Helical transmembrane passes span 15–37 (LRTG…VLIA), 44–66 (FSGV…LIQL), 81–103 (LLRL…SLGF), 105–124 (MLAV…ILMG), 134–156 (VLLI…EGVT), 163–185 (VVTA…PFAT), 205–227 (EIAQ…AVVV), 261–280 (VVPL…STVA), 285–307 (VIAA…LGCG), and 320–342 (PFIL…TLLT).

It belongs to the UPF0324 family.

Its subcellular location is the cell membrane. In Corynebacterium glutamicum (strain ATCC 13032 / DSM 20300 / JCM 1318 / BCRC 11384 / CCUG 27702 / LMG 3730 / NBRC 12168 / NCIMB 10025 / NRRL B-2784 / 534), this protein is UPF0324 membrane protein Cgl0015/cg0018.